The sequence spans 67 residues: Conotoxin Cl6.6b (67 aa).

The first 24 residues, 1–24 (MKLTCVLIAAVLLLAVCQLDSADA), serve as a signal peptide directing secretion. Positions 25–37 (TGYMRKNPSLRSP) are excised as a propeptide. 3 cysteine pairs are disulfide-bonded: Cys-43–Cys-57, Cys-50–Cys-61, and Cys-56–Cys-65.

The protein belongs to the conotoxin O1 superfamily. Expressed by the venom duct.

The protein localises to the secreted. In Californiconus californicus (California cone), this protein is Conotoxin Cl6.6b.